Consider the following 109-residue polypeptide: Large ribosomal subunit protein uL24 (109 aa).

This sequence belongs to the universal ribosomal protein uL24 family. Part of the 50S ribosomal subunit.

One of two assembly initiator proteins, it binds directly to the 5'-end of the 23S rRNA, where it nucleates assembly of the 50S subunit. Functionally, one of the proteins that surrounds the polypeptide exit tunnel on the outside of the subunit. The chain is Large ribosomal subunit protein uL24 from Hamiltonella defensa subsp. Acyrthosiphon pisum (strain 5AT).